Consider the following 181-residue polypeptide: Disulfide bond formation protein B (181 aa).

Over 1 to 13 the chain is Cytoplasmic; sequence MLSVGQWPNKPFA. Residues 14–30 traverse the membrane as a helical segment; it reads WLLLFLGCSGLLGAALY. The Periplasmic segment spans residues 31–48; sequence FQMVLNLEPCVKCVYQRM. Cys-40 and Cys-43 are joined by a disulfide. Residues 49-64 form a helical membrane-spanning segment; the sequence is AVIGIGLSAIVGLFGS. At 65 to 71 the chain is on the cytoplasmic side; sequence GLWLTRW. A helical membrane pass occupies residues 72-89; it reads AALIGWLYSSYQGLLIAY. The Periplasmic segment spans residues 90 to 145; sequence DHWDLQTSKNAFFAVCESAPNFPDWAPMHEWMPGLFAAPGLCGDIDWQWLGLGMPG. An intrachain disulfide couples Cys-105 to Cys-131. The chain crosses the membrane as a helical span at residues 146-164; that stretch reads WMTVIFAGLLLIGIIVTIC. The Cytoplasmic portion of the chain corresponds to 165 to 181; it reads HIISSFTKKDGLVLYHK.

The protein belongs to the DsbB family.

The protein localises to the cell inner membrane. Required for disulfide bond formation in some periplasmic proteins. Acts by oxidizing the DsbA protein. This Idiomarina loihiensis (strain ATCC BAA-735 / DSM 15497 / L2-TR) protein is Disulfide bond formation protein B.